The sequence spans 81 residues: MSHSVKIYDTCIGCTQCVRACPTDVLEMIPWDGCKAKQIASAPRTEDCVGCKRCESACPTDFLSVRVYLGPETTRSMALSY.

4Fe-4S ferredoxin-type domains are found at residues 2–31 and 39–68; these read SHSV…MIPW and IASA…VRVY. 8 residues coordinate [4Fe-4S] cluster: Cys-11, Cys-14, Cys-17, Cys-21, Cys-48, Cys-51, Cys-54, and Cys-58.

As to quaternary structure, the eukaryotic PSI reaction center is composed of at least 11 subunits. It depends on [4Fe-4S] cluster as a cofactor.

It localises to the plastid. Its subcellular location is the chloroplast thylakoid membrane. It carries out the reaction reduced [plastocyanin] + hnu + oxidized [2Fe-2S]-[ferredoxin] = oxidized [plastocyanin] + reduced [2Fe-2S]-[ferredoxin]. In terms of biological role, apoprotein for the two 4Fe-4S centers FA and FB of photosystem I (PSI); essential for photochemical activity. FB is the terminal electron acceptor of PSI, donating electrons to ferredoxin. The C-terminus interacts with PsaA/B/D and helps assemble the protein into the PSI complex. Required for binding of PsaD and PsaE to PSI. PSI is a plastocyanin-ferredoxin oxidoreductase, converting photonic excitation into a charge separation, which transfers an electron from the donor P700 chlorophyll pair to the spectroscopically characterized acceptors A0, A1, FX, FA and FB in turn. The sequence is that of Photosystem I iron-sulfur center from Triticum aestivum (Wheat).